The following is a 264-amino-acid chain: Glutamate racemase (264 aa).

Substrate is bound by residues 10–11 (DS) and 42–43 (YG). Cys-73 serves as the catalytic Proton donor/acceptor. Residue 74–75 (NT) participates in substrate binding. Cys-183 functions as the Proton donor/acceptor in the catalytic mechanism. 184–185 (TH) contacts substrate.

The protein belongs to the aspartate/glutamate racemases family.

It catalyses the reaction L-glutamate = D-glutamate. The protein operates within cell wall biogenesis; peptidoglycan biosynthesis. Its function is as follows. Provides the (R)-glutamate required for cell wall biosynthesis. In Streptococcus pyogenes serotype M18 (strain MGAS8232), this protein is Glutamate racemase.